Reading from the N-terminus, the 220-residue chain is Uracil-DNA glycosylase (220 aa).

The active-site Proton acceptor is the aspartate 60.

It belongs to the uracil-DNA glycosylase (UDG) superfamily. UNG family.

The protein localises to the cytoplasm. The enzyme catalyses Hydrolyzes single-stranded DNA or mismatched double-stranded DNA and polynucleotides, releasing free uracil.. In terms of biological role, excises uracil residues from the DNA which can arise as a result of misincorporation of dUMP residues by DNA polymerase or due to deamination of cytosine. This Francisella tularensis subsp. tularensis (strain FSC 198) protein is Uracil-DNA glycosylase.